Here is a 31-residue protein sequence, read N- to C-terminus: AFCNLRMCQLSCRSLGLLGKCIGDKCECVKH.

3 disulfides stabilise this stretch: C3-C21, C8-C26, and C12-C28. The interval 6–9 (RMCQ) is [R/K]XCQ motif. H31 is subject to Histidine amide.

The protein belongs to the short scorpion toxin superfamily. Potassium channel inhibitor family. Alpha-KTx 05 subfamily. Post-translationally, two disulfide bonds are the minimal requirement needed to produce a nativelike and bio-active conformation in this toxin. The third disulfide provides an additional contribution to structure stabilization and can modulate biological potency depending on its position and the structural regions involved in biological activity. As to expression, expressed by the venom gland.

The protein localises to the secreted. In terms of biological role, blocker for the small conductance calcium-activated potassium channels. Shows the best affinity for KCa2.2/KCNN2 (Kd=0.2 nM), followed by KCa2.3/KCNN3 (Kd=1.1 nM) and KCa2.1/KCNN1 (Kd=325 nM). The protein is Potassium channel toxin alpha-KTx 5.1 of Leiurus hebraeus (Hebrew deathstalker scorpion).